Reading from the N-terminus, the 449-residue chain is UDP-N-acetylmuramoylalanine--D-glutamate ligase (449 aa).

118–124 (GTNGKTT) is a binding site for ATP.

Belongs to the MurCDEF family.

It localises to the cytoplasm. The catalysed reaction is UDP-N-acetyl-alpha-D-muramoyl-L-alanine + D-glutamate + ATP = UDP-N-acetyl-alpha-D-muramoyl-L-alanyl-D-glutamate + ADP + phosphate + H(+). Its pathway is cell wall biogenesis; peptidoglycan biosynthesis. Its function is as follows. Cell wall formation. Catalyzes the addition of glutamate to the nucleotide precursor UDP-N-acetylmuramoyl-L-alanine (UMA). The protein is UDP-N-acetylmuramoylalanine--D-glutamate ligase of Staphylococcus haemolyticus (strain JCSC1435).